The sequence spans 328 residues: 4-hydroxythreonine-4-phosphate dehydrogenase (328 aa).

Residues histidine 130 and threonine 131 each contribute to the substrate site. The a divalent metal cation site is built by histidine 163, histidine 208, and histidine 263. Residues lysine 271, asparagine 280, and arginine 289 each contribute to the substrate site.

The protein belongs to the PdxA family. In terms of assembly, homodimer. Zn(2+) is required as a cofactor. It depends on Mg(2+) as a cofactor. Requires Co(2+) as cofactor.

It is found in the cytoplasm. It catalyses the reaction 4-(phosphooxy)-L-threonine + NAD(+) = 3-amino-2-oxopropyl phosphate + CO2 + NADH. Its pathway is cofactor biosynthesis; pyridoxine 5'-phosphate biosynthesis; pyridoxine 5'-phosphate from D-erythrose 4-phosphate: step 4/5. Catalyzes the NAD(P)-dependent oxidation of 4-(phosphooxy)-L-threonine (HTP) into 2-amino-3-oxo-4-(phosphooxy)butyric acid which spontaneously decarboxylates to form 3-amino-2-oxopropyl phosphate (AHAP). This is 4-hydroxythreonine-4-phosphate dehydrogenase from Burkholderia vietnamiensis (strain G4 / LMG 22486) (Burkholderia cepacia (strain R1808)).